The sequence spans 286 residues: Urease accessory protein UreD 2 (286 aa).

Belongs to the UreD family. As to quaternary structure, ureD, UreF and UreG form a complex that acts as a GTP-hydrolysis-dependent molecular chaperone, activating the urease apoprotein by helping to assemble the nickel containing metallocenter of UreC. The UreE protein probably delivers the nickel.

The protein localises to the cytoplasm. Functionally, required for maturation of urease via the functional incorporation of the urease nickel metallocenter. This chain is Urease accessory protein UreD 2, found in Bradyrhizobium sp. (strain ORS 278).